Here is a 327-residue protein sequence, read N- to C-terminus: uncharacterized protein (327 aa).

This is an uncharacterized protein from Lepidoptera (butterflies and moths).